The sequence spans 171 residues: Glutathione peroxidase-like peroxiredoxin GPX3 (171 aa).

Cysteine 43 (cysteine sulfenic acid (-SOH) intermediate) is an active-site residue. Cysteine 43 and cysteine 89 are oxidised to a cystine.

It belongs to the glutathione peroxidase family. As to quaternary structure, interacts with CAP1 and probably YBP1.

It catalyses the reaction a hydroperoxide + [thioredoxin]-dithiol = an alcohol + [thioredoxin]-disulfide + H2O. Functionally, involved in oxidative stress response and redox homeostasis. Functions as a sensor and transducer of hydroperoxide stress. In response to hydroperoxide stress it oxidizes (activates) the transcription activator CAP1, which is involved in transcription activation of genes of the oxidative stress response pathway. May also play a direct role in hydroperoxide scavenging. The enzyme is not required for the glutaredoxin-mediated antioxidant function. In the presence of peroxides, GPX3 is directly oxidized at Cys-43 to form a cysteine sulfenic acid (-SOH). Cys-43-SOH then forms either an intramolecular disulfide bond (Cys-43 with Cys-89) or a transient, intermolecular disulfide bond with 'Cys-446' of CAP1, which is further resolved into a CAP1 intramolecular disulfide bond ('Cys-303' with 'Cys-598'), which causes its nuclear accumulation and activation, and a reduced Cys-43 in GPX3. Required for C.albicans-mediated macrophage killing. In Candida albicans (strain SC5314 / ATCC MYA-2876) (Yeast), this protein is Glutathione peroxidase-like peroxiredoxin GPX3.